A 388-amino-acid polypeptide reads, in one-letter code: Calcium-binding and spermatid-specific protein 1 (388 aa).

The tract at residues Met-1–Thr-20 is disordered. Thr-280 is modified (phosphothreonine; by CK2). 2 positions are modified to phosphoserine: Ser-312 and Ser-344.

The protein localises to the cytoplasm. The protein resides in the mitochondrion inner membrane. Its subcellular location is the cell projection. It localises to the cilium. It is found in the flagellum. The protein localises to the cytoplasmic vesicle. The protein resides in the secretory vesicle. Its subcellular location is the acrosome. Functionally, calcium-binding protein. Essential for maintaining the structural integrity of the sperm flagella. This is Calcium-binding and spermatid-specific protein 1 (CABS1) from Bos taurus (Bovine).